The primary structure comprises 50 residues: Mast cell degranulating peptide (50 aa).

The N-terminal stretch at 1 to 27 (MISMLRCTFFFLSVILITSYFVTPTMS) is a signal peptide. Lys-29 bears the N6-formyllysine; partial mark. 2 disulfides stabilise this stretch: Cys-30/Cys-42 and Cys-32/Cys-46. Lys-44 and Lys-48 each carry N6-formyllysine; partial. Residue Asn-49 is modified to Asparagine amide.

As to expression, expressed by the venom gland.

The protein localises to the secreted. Functionally, potent anti-inflammatory agent. At low concentrations, mediates the degranulation of mast cells thus evoking an inflammatory response. Also acts as a neurotoxin capable of blocking a class of voltage-gated potassium channels. The sequence is that of Mast cell degranulating peptide from Apis mellifera (Honeybee).